The primary structure comprises 250 residues: Acidic leucine-rich nuclear phosphoprotein 32 family member E (250 aa).

Ser-8 is modified (phosphoserine). LRR repeat units follow at residues 43–64 (ELEF…PSLP), 65–87 (KLRK…AEKC), and 89–110 (NLTY…EALQ). The 39-residue stretch at 123 to 161 (CEITTLEDYRESIFELLPQVTYLDGFDAEDNEAPDSEAD) folds into the LRRCT domain. Acidic residues-rich tracts occupy residues 149-171 (DAED…DGDE), 178-191 (EYEE…EGSE), and 205-227 (IQDE…EEEA). The segment at 149-250 (DAEDNEAPDS…EGEDDDEDDD (102 aa)) is disordered. A ZID domain region spans residues 194–247 (EVGLSYLMKEDIQDEEDDDDYVEEEEEEGGEEEADVRGEKRKREAEDEGEDDDE). The segment covering 228–238 (DVRGEKRKREA) has biased composition (basic and acidic residues). Residues 239–250 (EDEGEDDDEDDD) show a composition bias toward acidic residues.

This sequence belongs to the ANP32 family. Component of a SWR1-like complex. Interacts with H2A.Z/H2AZ1. Post-translationally, phosphorylated. The phosphorylation is nuclear localization signal (NLS)-dependent.

The protein resides in the cytoplasm. It localises to the nucleus. Histone chaperone that specifically mediates the genome-wide removal of histone H2A.Z/H2AZ1 from the nucleosome: removes H2A.Z/H2AZ1 from its normal sites of deposition, especially from enhancer and insulator regions. Not involved in deposition of H2A.Z/H2AZ1 in the nucleosome. May stabilize the evicted H2A.Z/H2AZ1-H2B dimer, thus shifting the equilibrium towards dissociation and the off-chromatin state. Inhibits activity of protein phosphatase 2A (PP2A). Does not inhibit protein phosphatase 1. May play a role in cerebellar development and synaptogenesis. This chain is Acidic leucine-rich nuclear phosphoprotein 32 family member E (anp32e), found in Danio rerio (Zebrafish).